The chain runs to 235 residues: Succinate dehydrogenase iron-sulfur subunit (235 aa).

Residues Cys-53, Cys-58, and Cys-73 each contribute to the [2Fe-2S] cluster site. Residues 133–163 (ERAKLDGLYECILCACCSSSCPSYWWNPDKF) form the 4Fe-4S ferredoxin-type domain. Residues Cys-143, Cys-146, and Cys-149 each coordinate [4Fe-4S] cluster. Cys-153 contacts [3Fe-4S] cluster. Trp-158 is a binding site for a ubiquinone. [3Fe-4S] cluster is bound by residues Cys-200 and Cys-206. Cys-210 contacts [4Fe-4S] cluster.

Belongs to the succinate dehydrogenase/fumarate reductase iron-sulfur protein family. In terms of assembly, part of an enzyme complex containing four subunits: a flavoprotein, an iron-sulfur protein, cytochrome b-556 and a hydrophobic protein. The cofactor is [2Fe-2S] cluster. [3Fe-4S] cluster serves as cofactor. [4Fe-4S] cluster is required as a cofactor.

The enzyme catalyses a quinone + succinate = fumarate + a quinol. It participates in carbohydrate metabolism; tricarboxylic acid cycle; fumarate from succinate (bacterial route): step 1/1. This chain is Succinate dehydrogenase iron-sulfur subunit (sdhB), found in Coxiella burnetii (strain RSA 493 / Nine Mile phase I).